We begin with the raw amino-acid sequence, 255 residues long: Hydroxylmethylpyrimidine kinase (255 aa).

Pyridoxal 5'-phosphate is bound by residues Gly18, Gln43, and Asn110. Residue Gln43 participates in 4-amino-5-hydroxymethyl-2-methylpyrimidine binding. A disulfide bridge connects residues Cys195 and Cys207. Position 208 (Ser208) interacts with pyridoxal 5'-phosphate.

This sequence belongs to the ThiD family. In terms of assembly, homodimer. In terms of processing, crystals show a disulfide bond between Cys-195 and Cys-207. This disulfide is possibly an artifact of the purification and crystallization conditions. However, as it is adjacent to the conserved GSGC of the oxyanion hole, this disulfide may help to orient the backbone amides toward the oxanion intermediate.

It catalyses the reaction 4-amino-5-hydroxymethyl-2-methylpyrimidine + ATP = 4-amino-2-methyl-5-(phosphooxymethyl)pyrimidine + ADP + H(+). The protein operates within cofactor biosynthesis; thiamine diphosphate biosynthesis. Inhibited by pyridoxal phosphate at high micromolar concentrations. In terms of biological role, catalyzes the phosphorylation of hydroxymethylpyrimidine (HMP) to hydroxymethylpyrimidine phosphate (HMP-P). Unlike other HMPKs, it cannot catalyze the phosphorylation of HMP-P to generate the diphosphate HMP-PP. Shows no activity with pyridoxal, pyridoxamine or pyridoxine. Does not show phosphatase activity. The chain is Hydroxylmethylpyrimidine kinase from Acinetobacter baumannii (strain IS-123).